Here is a 553-residue protein sequence, read N- to C-terminus: Putative transport protein YidE (553 aa).

5 consecutive transmembrane segments (helical) span residues 4-24, 28-48, 65-85, 95-115, and 158-178; these read IALT…IGNI, GVGF…HFVD, FGLI…FFAS, LFAV…HKIF, and MSYA…MWLM. RCK C-terminal domains are found at residues 192–276 and 279–361; these read KHES…VIGK and DTSL…VVGN. A run of 6 helical transmembrane segments spans residues 371–391, 393–413, 437–457, 464–484, 493–513, and 533–553; these read MLPV…PLFV, GFPV…ALIL, LGIV…FVDT, LSWI…IGLL, YLTL…LAFA, and LVMF…WGMG.

It belongs to the AAE transporter (TC 2.A.81) family. YidE subfamily.

It localises to the cell membrane. This chain is Putative transport protein YidE, found in Salmonella paratyphi C (strain RKS4594).